The chain runs to 287 residues: Small ribosomal subunit biogenesis GTPase RsgA (287 aa).

In terms of domain architecture, CP-type G spans 63–223 (KNLLIRPKVA…VIDTPGFGSL (161 aa)). GTP-binding positions include 113-116 (SKMD) and 166-174 (GQSGVGKST). Residues cysteine 246, cysteine 251, histidine 253, and cysteine 259 each coordinate Zn(2+).

Belongs to the TRAFAC class YlqF/YawG GTPase family. RsgA subfamily. In terms of assembly, monomer. Associates with 30S ribosomal subunit, binds 16S rRNA. Requires Zn(2+) as cofactor.

The protein resides in the cytoplasm. In terms of biological role, one of several proteins that assist in the late maturation steps of the functional core of the 30S ribosomal subunit. Helps release RbfA from mature subunits. May play a role in the assembly of ribosomal proteins into the subunit. Circularly permuted GTPase that catalyzes slow GTP hydrolysis, GTPase activity is stimulated by the 30S ribosomal subunit. The sequence is that of Small ribosomal subunit biogenesis GTPase RsgA from Malacoplasma penetrans (strain HF-2) (Mycoplasma penetrans).